We begin with the raw amino-acid sequence, 408 residues long: Na(+)/H(+) antiporter NhaA 2 (408 aa).

The next 11 membrane-spanning stretches (helical) occupy residues 36–56 (GILL…GLGV), 79–99 (ILLW…GLEI), 115–135 (ALPV…YFLF), 145–165 (GWGI…SLLG), 174–194 (IFLA…IAVF), 197–217 (SELH…LMVF), 225–245 (LFFY…SGIH), 281–301 (FIIM…SEML), 310–330 (LGII…MSWL), 348–368 (VLGL…IALL), and 381–401 (FAIL…LSSY).

This sequence belongs to the NhaA Na(+)/H(+) (TC 2.A.33) antiporter family.

The protein resides in the cell inner membrane. The catalysed reaction is Na(+)(in) + 2 H(+)(out) = Na(+)(out) + 2 H(+)(in). In terms of biological role, na(+)/H(+) antiporter that extrudes sodium in exchange for external protons. In Flavobacterium johnsoniae (strain ATCC 17061 / DSM 2064 / JCM 8514 / BCRC 14874 / CCUG 350202 / NBRC 14942 / NCIMB 11054 / UW101) (Cytophaga johnsonae), this protein is Na(+)/H(+) antiporter NhaA 2.